The chain runs to 181 residues: Transcriptional repressor NrdR (181 aa).

The segment at 3 to 34 is a zinc-finger region; the sequence is CLFCQHTDTRVIDSRVSEDGATIRRRRECEAC. The region spanning 49–139 is the ATP-cone domain; sequence PVIIKKDGGR…VYRSFQDVAD (91 aa).

This sequence belongs to the NrdR family. It depends on Zn(2+) as a cofactor.

Functionally, negatively regulates transcription of bacterial ribonucleotide reductase nrd genes and operons by binding to NrdR-boxes. This Xylella fastidiosa (strain M12) protein is Transcriptional repressor NrdR.